A 303-amino-acid polypeptide reads, in one-letter code: Acetyltransferase ataH (303 aa).

A signal peptide spans 1–23; that stretch reads MPTTAAFLRALYILTTLRGIGTS. 3 helical membrane passes run 42–62, 194–214, and 257–277; these read FLLHTLVIIAAKYLVLDMMTF, LVFAISSCLHLAIDGRAGIML, and GYIWTWAFLSLVAPMYNFPLF.

It belongs to the wax synthase family.

The protein resides in the membrane. Its pathway is mycotoxin biosynthesis. Functionally, acetyltransferase; part of the gene cluster that mediates the biosynthesis of acetylaranotin, a member of the epipolythiodioxopiperazine (ETP) class of toxins characterized by a disulfide-bridged cyclic dipeptide. The first step of acetylaranotin biosynthesis is performed by the NRPS ataP which produces diketopiperazine cyclo-L-Phe-L-Phe via the condensation of 2 phenylalanines (L-Phe). The ataC domain of ataTC then catalyzes the formation of bishydroxylation of cyclo-L-Phe-L-Phe. The glutathione S-transferase domain ataG in ataIMG further catalyzes the conjugation of two glutathiones to the bishydroxylated intermediate. Next, the dipeptidase ataJ removes the Glu residues. The following step is performed by the carbon sulfur lyase domain ataI of ataIMG which may convert the bis-cysteinyl adduct to yield an epidithiol intermediate. The ataT domain from ataTC then catalyzes the oxidation of the free dithiols, followed by a cyclization step catalyzed by the cytochrome P450 ataF. AtaF probably acts as an epoxidase to promote a dual epoxidation formation at C8 and C9 along with C8' and C9', followed by the spontaneous nucleophilic attack of the amide nitrogens N10 and N10' to yield an intermediate with the pyrrolidine partial structure. The final steps of acetylaranotin biosynthesis involve the acetylation and ring rearrangement of an epitetrathiodiketopiperazine intermediate to produce acetylaranotin. AtaH probably catalyzes the acetylation of epitetrathiodiketopiperazine to produce a diacetate and ataY is responsible for the formation of the dihydrooxepin moiety that converts the diacetate intermediate to acetylaranotin via acetylapoaranotin. Both enzymes could function independently in the absence of the other. The acetylaranotin bis-thiomethyltransferase ataS located outside of acetylaranotin gene cluster is the main thiomethyltransferase responsible for converting acetylaranotin and its related intermediates to their methylated forms. The sequence is that of Acetyltransferase ataH from Aspergillus terreus (strain NIH 2624 / FGSC A1156).